A 505-amino-acid chain; its full sequence is 2,3-bisphosphoglycerate-independent phosphoglycerate mutase (505 aa).

Mn(2+) is bound by residues Asp13 and Ser63. Ser63 functions as the Phosphoserine intermediate in the catalytic mechanism. Residues His124, Arg153–Asp154, Arg183, Arg189, Arg254–Arg257, and Lys330 each bind substrate. Residues Asp396, His400, Asp437, His438, and His456 each coordinate Mn(2+).

It belongs to the BPG-independent phosphoglycerate mutase family. Monomer. It depends on Mn(2+) as a cofactor.

It catalyses the reaction (2R)-2-phosphoglycerate = (2R)-3-phosphoglycerate. Its pathway is carbohydrate degradation; glycolysis; pyruvate from D-glyceraldehyde 3-phosphate: step 3/5. Functionally, catalyzes the interconversion of 2-phosphoglycerate and 3-phosphoglycerate. This is 2,3-bisphosphoglycerate-independent phosphoglycerate mutase from Roseobacter denitrificans (strain ATCC 33942 / OCh 114) (Erythrobacter sp. (strain OCh 114)).